The chain runs to 1192 residues: Integrator complex subunit 2 (1192 aa).

Residues 420–436 (FVSLSFCMLLAFSTLVS) traverse the membrane as a helical segment.

The protein belongs to the Integrator subunit 2 family. Component of the Integrator complex, composed of core subunits INTS1, INTS2, INTS3, INTS4, INTS5, INTS6, INTS7, INTS8, INTS9/RC74, INTS10, INTS11/CPSF3L, INTS12, INTS13, INTS14 and INTS15. The core complex associates with protein phosphatase 2A subunits PPP2CA and PPP2R1A, to form the Integrator-PP2A (INTAC) complex.

Its subcellular location is the nucleus. The protein resides in the nucleus membrane. It is found in the cytoplasm. In terms of biological role, component of the integrator complex, a multiprotein complex that terminates RNA polymerase II (Pol II) transcription in the promoter-proximal region of genes. The integrator complex provides a quality checkpoint during transcription elongation by driving premature transcription termination of transcripts that are unfavorably configured for transcriptional elongation: the complex terminates transcription by (1) catalyzing dephosphorylation of the C-terminal domain (CTD) of Pol II subunit POLR2A/RPB1 and SUPT5H/SPT5, (2) degrading the exiting nascent RNA transcript via endonuclease activity and (3) promoting the release of Pol II from bound DNA. The integrator complex is also involved in terminating the synthesis of non-coding Pol II transcripts, such as enhancer RNAs (eRNAs), small nuclear RNAs (snRNAs), telomerase RNAs and long non-coding RNAs (lncRNAs). In Gallus gallus (Chicken), this protein is Integrator complex subunit 2 (INTS2).